Here is a 346-residue protein sequence, read N- to C-terminus: Peripherin-2 (346 aa).

The Cytoplasmic portion of the chain corresponds to 1–18 (MALLKVKFDQKKRVKLAQ). The helical transmembrane segment at 19–41 (GLWLMNWFSVLAGIIIFGLGLFL) threads the bilayer. Topologically, residues 42-62 (KIELRKRSDVMNNSESHFVPN) are lumenal. Residue Asn-53 is glycosylated (N-linked (GlcNAc...) asparagine). The helical transmembrane segment at 63 to 79 (SLIGVGVLSCVFNSLAG) threads the bilayer. The Cytoplasmic segment spans residues 80-101 (KICYDALDPAKYAKWKPWLKPY). The helical transmembrane segment at 102–122 (LAVCVLFNVVLFLVALCCFLL) threads the bilayer. Residues 123–264 (RGSLESTLAH…LSYYSNLMNT (142 aa)) are Lumenal-facing. Residues Asn-229 and Asn-263 are each glycosylated (N-linked (GlcNAc...) asparagine). A helical membrane pass occupies residues 265 to 283 (TGAVTLLVWLFEVTITVGL). The Cytoplasmic segment spans residues 284-346 (RYLHTALEGM…EDAGQAPAAG (63 aa)). The interaction with MREG stretch occupies residues 341 to 346 (QAPAAG).

It belongs to the PRPH2/ROM1 family. In terms of assembly, homodimer; disulfide-linked. Forms a homotetramer. Forms a heterotetramer with ROM1. Homotetramer and heterotetramer core complexes go on to form higher order complexes by formation of intermolecular disulfide bonds. Interacts with MREG. Interacts with STX3. Interacts with SNAP25. In terms of tissue distribution, retina (photoreceptor). In rim region of ROS (rod outer segment) disks.

The protein resides in the membrane. It localises to the cell projection. The protein localises to the cilium. Its subcellular location is the photoreceptor outer segment. It is found in the photoreceptor inner segment. In terms of biological role, essential for retina photoreceptor outer segment disk morphogenesis, may also play a role with ROM1 in the maintenance of outer segment disk structure. Required for the maintenance of retinal outer nuclear layer thickness. Required for the correct development and organization of the photoreceptor inner segment. This chain is Peripherin-2 (PRPH2), found in Bos taurus (Bovine).